The sequence spans 582 residues: ATP-dependent lipid A-core flippase (582 aa).

5 consecutive transmembrane segments (helical) span residues 16 to 36, 63 to 83, 153 to 173, 253 to 273, and 275 to 295; these read LWPT…ALIL, VLVW…ITSY, IIGL…ILIV, PIIQ…ASFP, and VMDS…IALM. An ABC transmembrane type-1 domain is found at 28-310; the sequence is IVAGVALILN…LTNVNAQFQR (283 aa). Positions 342–578 constitute an ABC transporter domain; that stretch reads VEFRNVTFTY…RGVYAQLHKM (237 aa). 376 to 383 serves as a coordination point for ATP; it reads GRSGSGKS.

The protein belongs to the ABC transporter superfamily. Lipid exporter (TC 3.A.1.106) family. As to quaternary structure, homodimer.

The protein resides in the cell inner membrane. It catalyses the reaction ATP + H2O + lipid A-core oligosaccharideSide 1 = ADP + phosphate + lipid A-core oligosaccharideSide 2.. Its function is as follows. Involved in lipopolysaccharide (LPS) biosynthesis. Translocates lipid A-core from the inner to the outer leaflet of the inner membrane. Transmembrane domains (TMD) form a pore in the inner membrane and the ATP-binding domain (NBD) is responsible for energy generation. This Escherichia coli O157:H7 protein is ATP-dependent lipid A-core flippase.